Consider the following 144-residue polypeptide: Large ribosomal subunit protein uL15 (144 aa).

A disordered region spans residues 1 to 56 (MELNTLAPAPGAKSSKKRVGRGIGSGLGKTGGRGHKGQKSRSGGSVKPGFEGGQMP). The segment covering 21 to 31 (RGIGSGLGKTG) has biased composition (gly residues).

This sequence belongs to the universal ribosomal protein uL15 family. In terms of assembly, part of the 50S ribosomal subunit.

Functionally, binds to the 23S rRNA. This chain is Large ribosomal subunit protein uL15, found in Idiomarina loihiensis (strain ATCC BAA-735 / DSM 15497 / L2-TR).